A 354-amino-acid chain; its full sequence is Guanine nucleotide-binding protein G(i) subunit alpha (354 aa).

A lipid anchor (N-myristoyl glycine) is attached at glycine 2. A lipid anchor (S-palmitoyl cysteine) is attached at cysteine 3. The 323-residue stretch at 32 to 354 (REVKLLLLGA…KNNLKDCGLF (323 aa)) folds into the G-alpha domain. The interval 35–48 (KLLLLGAGESGKST) is G1 motif. GTP is bound by residues 40-47 (GAGESGKS), 175-181 (LRTRVKT), 200-204 (DVGGQ), 269-272 (NKKD), and alanine 326. Mg(2+) is bound by residues serine 47 and threonine 181. The tract at residues 173–181 (DVLRTRVKT) is G2 motif. The segment at 196 to 205 (FKMFDVGGQR) is G3 motif. A G4 motif region spans residues 265–272 (ILFLNKKD). Residues 324–329 (TCATDT) are G5 motif.

It belongs to the G-alpha family. G(i/o/t/z) subfamily. G proteins are composed of 3 units; alpha, beta and gamma. The alpha chain contains the guanine nucleotide binding site.

Guanine nucleotide-binding proteins (G proteins) are involved as modulators or transducers in various transmembrane signaling systems. The G(i) proteins are involved in hormonal regulation of adenylate cyclase: they inhibit the cyclase in response to beta-adrenergic stimuli. This Lymnaea stagnalis (Great pond snail) protein is Guanine nucleotide-binding protein G(i) subunit alpha.